The following is a 428-amino-acid chain: 3-phosphoshikimate 1-carboxyvinyltransferase (428 aa).

3 residues coordinate 3-phosphoshikimate: K19, S20, and R24. K19 is a binding site for phosphoenolpyruvate. Residues G91 and R119 each contribute to the phosphoenolpyruvate site. 3-phosphoshikimate is bound by residues S164, Q166, D312, and K339. Phosphoenolpyruvate is bound at residue Q166. Residue D312 is the Proton acceptor of the active site. Positions 343 and 386 each coordinate phosphoenolpyruvate.

This sequence belongs to the EPSP synthase family. Monomer.

It localises to the cytoplasm. The enzyme catalyses 3-phosphoshikimate + phosphoenolpyruvate = 5-O-(1-carboxyvinyl)-3-phosphoshikimate + phosphate. It participates in metabolic intermediate biosynthesis; chorismate biosynthesis; chorismate from D-erythrose 4-phosphate and phosphoenolpyruvate: step 6/7. Catalyzes the transfer of the enolpyruvyl moiety of phosphoenolpyruvate (PEP) to the 5-hydroxyl of shikimate-3-phosphate (S3P) to produce enolpyruvyl shikimate-3-phosphate and inorganic phosphate. The protein is 3-phosphoshikimate 1-carboxyvinyltransferase of Bacillus subtilis (strain 168).